Here is a 283-residue protein sequence, read N- to C-terminus: Release factor glutamine methyltransferase (283 aa).

Residues Asp-143 and Asn-189 each contribute to the S-adenosyl-L-methionine site. Residue 189 to 192 (NPPY) participates in substrate binding.

It belongs to the protein N5-glutamine methyltransferase family. PrmC subfamily.

The catalysed reaction is L-glutaminyl-[peptide chain release factor] + S-adenosyl-L-methionine = N(5)-methyl-L-glutaminyl-[peptide chain release factor] + S-adenosyl-L-homocysteine + H(+). In terms of biological role, methylates the class 1 translation termination release factors RF1/PrfA and RF2/PrfB on the glutamine residue of the universally conserved GGQ motif. The protein is Release factor glutamine methyltransferase of Clostridium botulinum (strain Hall / ATCC 3502 / NCTC 13319 / Type A).